Reading from the N-terminus, the 320-residue chain is Mitochondrial thiamine pyrophosphate carrier (320 aa).

Solcar repeat units lie at residues Asn13–Leu106, Arg116–Leu202, and Asn214–Val309. A helical transmembrane segment spans residues Ala19–Ile39. Ser51 is subject to Phosphoserine. Transmembrane regions (helical) follow at residues Ile87–Val107, Phe122–Leu142, Val173–Phe193, and Leu220–Phe240. The Substrate recognition motif lies at Lys241 to Val246. Residues Ala293–Met313 traverse the membrane as a helical segment.

It belongs to the mitochondrial carrier (TC 2.A.29) family.

It localises to the mitochondrion membrane. The enzyme catalyses thiamine phosphate(out) + thiamine diphosphate(in) = thiamine phosphate(in) + thiamine diphosphate(out). Its function is as follows. Mitochondrial transporter mediating uptake of thiamine diphosphate into mitochondria. It is not clear if the antiporter activity is affected by the membrane potential or by the proton electrochemical gradient. In Macaca fascicularis (Crab-eating macaque), this protein is Mitochondrial thiamine pyrophosphate carrier (SLC25A19).